Consider the following 1399-residue polypeptide: DNA-directed RNA polymerase subunit beta' (1399 aa).

Zn(2+) is bound by residues Cys-70, Cys-72, Cys-85, and Cys-88. Residues Asp-460, Asp-462, and Asp-464 each contribute to the Mg(2+) site. Zn(2+)-binding residues include Cys-814, Cys-888, Cys-895, and Cys-898. The segment at 1367–1399 (SERKRQRDLGKPQRVSASEAEAALTEALNSSGN) is disordered. Positions 1382 to 1399 (SASEAEAALTEALNSSGN) are enriched in low complexity.

Belongs to the RNA polymerase beta' chain family. In terms of assembly, the RNAP catalytic core consists of 2 alpha, 1 beta, 1 beta' and 1 omega subunit. When a sigma factor is associated with the core the holoenzyme is formed, which can initiate transcription. Requires Mg(2+) as cofactor. Zn(2+) serves as cofactor.

The enzyme catalyses RNA(n) + a ribonucleoside 5'-triphosphate = RNA(n+1) + diphosphate. DNA-dependent RNA polymerase catalyzes the transcription of DNA into RNA using the four ribonucleoside triphosphates as substrates. This is DNA-directed RNA polymerase subunit beta' from Pseudomonas aeruginosa (strain UCBPP-PA14).